The following is a 319-amino-acid chain: RWD domain-containing protein 2B (319 aa).

An RWD domain is found at 41 to 165 (SELDLLASMF…EWVREHASGY (125 aa)). Position 275 is a phosphoserine (serine 275).

The protein is RWD domain-containing protein 2B (RWDD2B) of Pongo abelii (Sumatran orangutan).